Reading from the N-terminus, the 511-residue chain is Maturase K (511 aa).

It belongs to the intron maturase 2 family. MatK subfamily.

The protein resides in the plastid. It is found in the chloroplast. In terms of biological role, usually encoded in the trnK tRNA gene intron. Probably assists in splicing its own and other chloroplast group II introns. The protein is Maturase K of Brachypodium distachyon (Purple false brome).